Consider the following 341-residue polypeptide: Biotin synthase (341 aa).

The Radical SAM core domain occupies 39-263 (EQVQLCTLLS…VAVARITMPL (225 aa)). The [4Fe-4S] cluster site is built by C54, C58, and C61. Residues C98, C129, C189, and R267 each contribute to the [2Fe-2S] cluster site.

This sequence belongs to the radical SAM superfamily. Biotin synthase family. As to quaternary structure, homodimer. Requires [4Fe-4S] cluster as cofactor. It depends on [2Fe-2S] cluster as a cofactor.

The enzyme catalyses (4R,5S)-dethiobiotin + (sulfur carrier)-SH + 2 reduced [2Fe-2S]-[ferredoxin] + 2 S-adenosyl-L-methionine = (sulfur carrier)-H + biotin + 2 5'-deoxyadenosine + 2 L-methionine + 2 oxidized [2Fe-2S]-[ferredoxin]. The protein operates within cofactor biosynthesis; biotin biosynthesis; biotin from 7,8-diaminononanoate: step 2/2. Its function is as follows. Catalyzes the conversion of dethiobiotin (DTB) to biotin by the insertion of a sulfur atom into dethiobiotin via a radical-based mechanism. The protein is Biotin synthase of Erythrobacter litoralis (strain HTCC2594).